A 333-amino-acid polypeptide reads, in one-letter code: Bacteriocin helveticin-J (333 aa).

In terms of biological role, this heat-sensitive bacteriocin inhibits the growth of closely related Lactobacillus species. The sequence is that of Bacteriocin helveticin-J (hlv) from Lactobacillus helveticus (Lactobacillus suntoryeus).